A 774-amino-acid polypeptide reads, in one-letter code: Protein translocase subunit SecA 2 (774 aa).

ATP-binding positions include glutamine 94, 112–116 (GEGKT), and aspartate 501.

Belongs to the SecA family. In terms of assembly, monomer and homodimer. Part of the essential Sec protein translocation apparatus which comprises SecA, SecYEG and auxiliary proteins SecDF. Other proteins may also be involved.

The protein localises to the cell membrane. It is found in the cytoplasm. The enzyme catalyses ATP + H2O + cellular proteinSide 1 = ADP + phosphate + cellular proteinSide 2.. Functionally, part of the Sec protein translocase complex. Interacts with the SecYEG preprotein conducting channel. Has a central role in coupling the hydrolysis of ATP to the transfer of proteins into and across the cell membrane, serving as an ATP-driven molecular motor driving the stepwise translocation of polypeptide chains across the membrane. The chain is Protein translocase subunit SecA 2 from Mycobacterium sp. (strain JLS).